We begin with the raw amino-acid sequence, 162 residues long: Succinate dehydrogenase assembly factor 2, mitochondrial (162 aa).

The N-terminal 35 residues, Met-1–Trp-35, are a transit peptide targeting the mitochondrion.

The protein belongs to the SDHAF2 family. Interacts with the flavoprotein subunit within the SDH catalytic dimer.

Its subcellular location is the mitochondrion matrix. Plays an essential role in the assembly of succinate dehydrogenase (SDH), an enzyme complex (also referred to as respiratory complex II) that is a component of both the tricarboxylic acid (TCA) cycle and the mitochondrial electron transport chain, and which couples the oxidation of succinate to fumarate with the reduction of ubiquinone (coenzyme Q) to ubiquinol. Required for flavinylation (covalent attachment of FAD) of the flavoprotein subunit of the SDH catalytic dimer. The polypeptide is Succinate dehydrogenase assembly factor 2, mitochondrial (Saccharomyces cerevisiae (strain RM11-1a) (Baker's yeast)).